The primary structure comprises 176 residues: Nucleoside triphosphate/diphosphate phosphatase (176 aa).

Residue Arg23 is the Proton donor of the active site. Residues Asn87, Asp103, Asp105, Asp107, Asp120, and Glu123 each coordinate Mg(2+).

It belongs to the Ntdp family. Mg(2+) serves as cofactor.

It catalyses the reaction a ribonucleoside 5'-triphosphate + H2O = a ribonucleoside 5'-diphosphate + phosphate + H(+). The enzyme catalyses a ribonucleoside 5'-diphosphate + H2O = a ribonucleoside 5'-phosphate + phosphate + H(+). Functionally, has nucleoside phosphatase activity towards nucleoside triphosphates and nucleoside diphosphates. The chain is Nucleoside triphosphate/diphosphate phosphatase from Bacillus velezensis (strain DSM 23117 / BGSC 10A6 / LMG 26770 / FZB42) (Bacillus amyloliquefaciens subsp. plantarum).